The primary structure comprises 486 residues: Cardiolipin synthase A (486 aa).

The next 2 helical transmembrane spans lie at 3–23 (TFYTVVNWLVILGYWLLIAGV) and 38–58 (MAWLLIIYILPLVGIIAYLSF). PLD phosphodiesterase domains are found at residues 219 to 246 (MDLRQHRKMVMIDNYIAYTGSMNMVDPR) and 399 to 426 (EGGLLHTKSVLVDGELSLVGTVNLDMRS). Residues H224, K226, D231, H404, K406, and D411 contribute to the active site.

The protein belongs to the phospholipase D family. Cardiolipin synthase subfamily. ClsA sub-subfamily.

The protein localises to the cell inner membrane. It catalyses the reaction 2 a 1,2-diacyl-sn-glycero-3-phospho-(1'-sn-glycerol) = a cardiolipin + glycerol. Its function is as follows. Catalyzes the reversible phosphatidyl group transfer from one phosphatidylglycerol molecule to another to form cardiolipin (CL) (diphosphatidylglycerol) and glycerol. In Klebsiella pneumoniae subsp. pneumoniae (strain ATCC 700721 / MGH 78578), this protein is Cardiolipin synthase A.